The chain runs to 1015 residues: PHD finger protein 20-like protein 1 (1015 aa).

In terms of domain architecture, Tudor 1 spans 11–71 (ITFEIGARLE…SNRLRPLERP (61 aa)). Glycyl lysine isopeptide (Lys-Gly) (interchain with G-Cter in SUMO2) cross-links involve residues Lys75 and Lys79. A Tudor 2 domain is found at 85-141 (FDFKAGEEVLARWTDCRYYPAKIEAINKEGTFTVQFYDGVIRCLKRMHIKAMPEDAK). 2 disordered regions span residues 183–206 (AKNK…RDGG) and 309–367 (EQAI…KAPK). Composition is skewed to polar residues over residues 186–197 (KTGSKPRTSANS) and 315–346 (KPQS…SSGK). Ser368 carries the post-translational modification Phosphoserine. Disordered stretches follow at residues 389-455 (VINK…SSVP) and 478-513 (CGSE…NPTS). The span at 404-415 (PCKHSERRRRSQ) shows a compositional bias: basic residues. Phosphoserine is present on Ser432. 2 stretches are compositionally biased toward polar residues: residues 443–453 (SISSQNQQESS) and 480–489 (SEVTGSQAPD). Lys530 participates in a covalent cross-link: Glycyl lysine isopeptide (Lys-Gly) (interchain with G-Cter in SUMO2). Over residues 539–565 (EKTSTAFGKRKEKDKERKEKRDKDHYK) the composition is skewed to basic and acidic residues. The interval 539–585 (EKTSTAFGKRKEKDKERKEKRDKDHYKPKQKKKKKKKKKSKQHDYSD) is disordered. Residues 566 to 579 (PKQKKKKKKKKKSK) are compositionally biased toward basic residues. A PHD-type zinc finger spans residues 681–729 (IVRCICELDEENGFMIQCEECLCWQHSVCMGLLEDSIPEQYICYICRDP). Lys849 is covalently cross-linked (Glycyl lysine isopeptide (Lys-Gly) (interchain with G-Cter in SUMO2)). The span at 859–878 (HSYQKPQSFSQDCHSLTDPG) shows a compositional bias: polar residues. The interval 859–889 (HSYQKPQSFSQDCHSLTDPGSSDDDDVSSFE) is disordered. Acidic residues predominate over residues 879–889 (SSDDDDVSSFE). Lys907 bears the N6-acetyllysine mark.

Interacts with methylated DNMT1 (DNMT1K142me1). Interacts with SOX2.

The protein localises to the nucleus. Functionally, is a negative regulator of proteasomal degradation of a set of methylated proteins, including DNMT1 and SOX2. Involved in the maintainance of embryonic stem cells pluripotency, through the regulation of SOX2 levels. This chain is PHD finger protein 20-like protein 1 (Phf20l1), found in Rattus norvegicus (Rat).